The primary structure comprises 230 residues: 7-cyano-7-deazaguanine synthase (230 aa).

Leu8 to Thr18 provides a ligand contact to ATP. Residues Cys186, Cys196, Cys199, and Cys202 each coordinate Zn(2+).

This sequence belongs to the QueC family. Zn(2+) serves as cofactor.

It catalyses the reaction 7-carboxy-7-deazaguanine + NH4(+) + ATP = 7-cyano-7-deazaguanine + ADP + phosphate + H2O + H(+). It functions in the pathway purine metabolism; 7-cyano-7-deazaguanine biosynthesis. Its function is as follows. Catalyzes the ATP-dependent conversion of 7-carboxy-7-deazaguanine (CDG) to 7-cyano-7-deazaguanine (preQ(0)). This Xylella fastidiosa (strain M23) protein is 7-cyano-7-deazaguanine synthase.